The chain runs to 441 residues: Vacuolar cation/proton exchanger 5 (441 aa).

Gly-2 carries N-myristoyl glycine lipidation. The Cytoplasmic portion of the chain corresponds to 2-69 (GCCKVPALIQ…PNNSVLQSFK (68 aa)). S-palmitoyl cysteine attachment occurs at residues Cys-3 and Cys-4. Residues 70 to 90 (IVILSNKLNLLLPFGPLAILL) form a helical membrane-spanning segment. Residues 91–97 (HYLTDNK) lie on the Extracellular side of the membrane. The helical transmembrane segment at 98-118 (GWIFLLSLVGITPLAERLGYA) threads the bilayer. Residues 119–129 (TEQLACYTGST) lie on the Cytoplasmic side of the membrane. A helical transmembrane segment spans residues 130–150 (VGGLLNATFGNVTELIISIFA). The cation selection stretch occupies residues 139–174 (GNVTELIISIFALKSGMIRVVQLTLLGSILSNMLLV). Residues 151–165 (LKSGMIRVVQLTLLG) lie on the Extracellular side of the membrane. Residues 166 to 186 (SILSNMLLVLGCAFFCGGLVF) traverse the membrane as a helical segment. Over 187-197 (SQKEQVFDKGN) the chain is Cytoplasmic. The helical transmembrane segment at 198 to 218 (AVVNSGLLLMAVMGLLFPAVL) threads the bilayer. Over 219-231 (HYTHSEVHAGSSE) the chain is Extracellular. The chain crosses the membrane as a helical span at residues 232 to 252 (LALSRFSSCIMLVAYAAYLFF). Residues 253–286 (QLKSQPSSYTPLTEETNQNEETSDDDEDPEISKW) lie on the Cytoplasmic side of the membrane. The helical transmembrane segment at 287–307 (EAIIWLSILTAWVSLLSGYLV) threads the bilayer. Residues 308–311 (DAIE) are Extracellular-facing. Residues 312–332 (GASVSWKIPISFISVILLPIV) form a helical membrane-spanning segment. At 333–354 (GNAAEHAGAIMFAMKDKLDLSL) the chain is on the cytoplasmic side. Positions 333-368 (GNAAEHAGAIMFAMKDKLDLSLGVAIGSSIQISMFA) are cation selection. Residues 355–375 (GVAIGSSIQISMFAVPFCVVI) traverse the membrane as a helical segment. The Extracellular portion of the chain corresponds to 376–384 (GWMMGAQMD). Residues 385–405 (LNFQLFETATLFITVIVVAFF) traverse the membrane as a helical segment. The Cytoplasmic segment spans residues 406–412 (LQEGTSN). A helical transmembrane segment spans residues 413-433 (YFKGLMLILCYLIVAASFFVH). Over 434–441 (EDPHQDDI) the chain is Extracellular.

This sequence belongs to the Ca(2+):cation antiporter (CaCA) (TC 2.A.19) family. Cation/proton exchanger (CAX) subfamily.

It is found in the vacuole membrane. Functionally, vacuolar cation/proton exchanger (CAX). Translocates Ca(2+) and other metal ions into vacuoles using the proton gradient formed by H(+)-ATPase and H(+)-pyrophosphatase. This chain is Vacuolar cation/proton exchanger 5 (CAX5), found in Arabidopsis thaliana (Mouse-ear cress).